Here is a 715-residue protein sequence, read N- to C-terminus: Polyribonucleotide nucleotidyltransferase (715 aa).

Residues D491 and D497 each contribute to the Mg(2+) site. In terms of domain architecture, KH spans P558–I617. The S1 motif domain maps to G627–K695.

This sequence belongs to the polyribonucleotide nucleotidyltransferase family. The cofactor is Mg(2+).

It is found in the cytoplasm. It catalyses the reaction RNA(n+1) + phosphate = RNA(n) + a ribonucleoside 5'-diphosphate. In terms of biological role, involved in mRNA degradation. Catalyzes the phosphorolysis of single-stranded polyribonucleotides processively in the 3'- to 5'-direction. This chain is Polyribonucleotide nucleotidyltransferase, found in Brevibacillus brevis (strain 47 / JCM 6285 / NBRC 100599).